The primary structure comprises 248 residues: Ras-related protein RSR1 (248 aa).

Position 10 to 17 (10 to 17 (GAGGVGKS)) interacts with GTP. An Effector region motif is present at residues 32–40 (YDPTIEDSY). GTP contacts are provided by residues 57–61 (DTAGV) and 116–119 (NKCD). The segment at 182-248 (LQKQQQQQQQ…SSGSKFCTII (67 aa)) is disordered. Positions 184–214 (KQQQQQQQEQDAEGQQQQQKSGKSKSSATQK) are enriched in low complexity. 2 stretches are compositionally biased toward polar residues: residues 219–231 (DGQTDVNARLKQS) and 238–248 (SSSGSKFCTII). C245 carries the cysteine methyl ester modification. C245 is lipidated: S-geranylgeranyl cysteine. A propeptide spans 246-248 (TII) (removed in mature form).

Belongs to the small GTPase superfamily. Ras family.

It is found in the cell membrane. The catalysed reaction is GTP + H2O = GDP + phosphate + H(+). With respect to regulation, alternates between an inactive form bound to GDP and an active form bound to GTP. Activated by a guanine nucleotide-exchange factor (GEF) and inactivated by a GTPase-activating protein (GAP). Ras-related protein which binds GDP/GTP and possesses intrinsic GTPase activity. Involved in both yeast and hypha development. In the yeast phase, it is required for normal (polar) bud site selection and is involved in cell morphogenesis; in the yeast-mycelial transition it is involved in germ tube emergence; and in the development of the hyphae it is involved in cell elongation. The chain is Ras-related protein RSR1 (RSR1) from Candida albicans (Yeast).